Reading from the N-terminus, the 725-residue chain is IML2-like protein SCY_3392 (725 aa).

Thr196 carries the phosphothreonine modification. Residues Ser246, Ser377, and Ser380 each carry the phosphoserine modification.

The protein belongs to the IML2 family.

It is found in the cytoplasm. Its subcellular location is the nucleus. Functionally, may be involved in mitochondrial DNA stability. The protein is IML2-like protein SCY_3392 of Saccharomyces cerevisiae (strain YJM789) (Baker's yeast).